Here is a 287-residue protein sequence, read N- to C-terminus: Bifunctional protein FolD (287 aa).

NADP(+) is bound by residues 166-168 and Ile232; that span reads GAS.

It belongs to the tetrahydrofolate dehydrogenase/cyclohydrolase family. Homodimer.

It carries out the reaction (6R)-5,10-methylene-5,6,7,8-tetrahydrofolate + NADP(+) = (6R)-5,10-methenyltetrahydrofolate + NADPH. The enzyme catalyses (6R)-5,10-methenyltetrahydrofolate + H2O = (6R)-10-formyltetrahydrofolate + H(+). It functions in the pathway one-carbon metabolism; tetrahydrofolate interconversion. Functionally, catalyzes the oxidation of 5,10-methylenetetrahydrofolate to 5,10-methenyltetrahydrofolate and then the hydrolysis of 5,10-methenyltetrahydrofolate to 10-formyltetrahydrofolate. The polypeptide is Bifunctional protein FolD (Pectobacterium atrosepticum (strain SCRI 1043 / ATCC BAA-672) (Erwinia carotovora subsp. atroseptica)).